The primary structure comprises 735 residues: Two pore calcium channel protein 1B (735 aa).

Residues 1–76 (MEEYLLPGES…ELYFMFTRFD (76 aa)) are Cytoplasmic-facing. A helical membrane pass occupies residues 77 to 97 (FLWSLNYLALVVLNFFEKPLW). Topologically, residues 98-125 (CSKHLAESCNNRDYYYLGELPFLTGAES) are extracellular. A helical membrane pass occupies residues 126–146 (LIFEGVTLLLLIIHILFPISY). Over 147–161 (EGFNLYWRSLLNRLK) the chain is Cytoplasmic. A helical membrane pass occupies residues 162–182 (VILLLILVADIVVYILLPADF). Position 183 (tyrosine 183) is a topological domain, extracellular. A helical; Voltage-sensor membrane pass occupies residues 184–202 (YLPFRIAPYLRVVFFILNI). Residues 203–208 (RELRDS) are Cytoplasmic-facing. A helical membrane pass occupies residues 209-229 (FFILAGMLGTYLNVVALSALF). Residues 230–248 (LLFSSWLAYVFFEDTRQGK) are Extracellular-facing. The pore-forming intramembrane region spans 249–263 (TTFTSYGTTLYQMFV). Residues 264–286 (LFTTSNNPDVWIPAYKDSRWYCL) lie on the Extracellular side of the membrane. Residues 287–307 (FFVLYVLLGVYFVTNLILAVV) form a helical membrane-spanning segment. Topologically, residues 308–431 (YDSFKSELVK…ASEKLRGFIR (124 aa)) are cytoplasmic. 2 EF-hand domains span residues 325–360 (LRLRTLKKAFSLIDEANNGLLNEKQCTLLFEELNKY) and 366–401 (ISGDDFKSIFNELDDTGDFKINLEEFADLCSAIGLR). The chain crosses the membrane as a helical span at residues 432–452 (GATFEYIIVFVLLVNLVAVII). The Extracellular segment spans residues 453 to 470 (ETTLDIQNNSGQTFWQKV). N-linked (GlcNAc...) asparagine glycosylation occurs at asparagine 460. A helical transmembrane segment spans residues 471–491 (EFTFGWLYVIEMALKVYTYGF). Residues 492–501 (ENYWRDGQNR) are Cytoplasmic-facing. The chain crosses the membrane as a helical span at residues 502–522 (FDFIVTWVIVIGETTTFVAPD). The Extracellular segment spans residues 523–531 (DLTFLSNGE). Residues 532–549 (WIRYLLIARMLRLIRLLM) form a helical; Voltage-sensor membrane-spanning segment. Over 550–560 (HVERYRAFVAT) the chain is Cytoplasmic. A helical transmembrane segment spans residues 561-581 (FLTLIPSLMPYLGTIFCILCF). Over 582-618 (YCSLGLQIFGGIVNTGNPNLAQTDLAGNDYLLFNFND) the chain is Extracellular. An intramembrane region (pore-forming) is located at residues 619-633 (YPNGMVTLFNILVMG). The Extracellular segment spans residues 634–654 (NWQVWMQSYKELTGTSWTYAY). The chain crosses the membrane as a helical span at residues 655 to 675 (FVSFYLISVLWLLNLIVAFVL). The Cytoplasmic segment spans residues 676 to 735 (EAFQAEMDLEASARCVDGDDKEAKRERRRNVGTKTRSQRVDFLLHHMLRSELTECSNDNP).

It belongs to the calcium channel alpha-1 subunit (TC 1.A.1.11) family. Two pore calcium channel subfamily. In terms of assembly, homodimer.

It localises to the membrane. With respect to regulation, inhibited by Al(3+), La(3+) and Gd(3+). Up-regulated by H(2)O(2), cryptogein, salicylic acid (SA) and cold shock. Functionally, functions as a voltage-gated inward-rectifying Ca(2+) channel (VDCC) across the plasma membrane that mediates sucrose-induced Ca(2+) influx in autotrophically grown leaf cells. Acts as the major ROS-responsive Ca(2+) channel and is the possible target of Al-dependent inhibition. Plays a regulatory role in defense responses. In Nicotiana tabacum (Common tobacco), this protein is Two pore calcium channel protein 1B (TPC1B).